Here is a 400-residue protein sequence, read N- to C-terminus: MAANYSSTSTRREHVKVKTGSQPGFLERLSETWGGMFVGLMAFLLSFYLIFTNEGRALKTATSLAEGLSLVVSPDSIHSVAPENEGRLVHIIGALRTSKLLSDPNYGVHLPAVKLRRHVEMYQWVETEESREYTEDEQVKKETRYSYNTEWRSEIINSKNFDREIGHKNPSAMAVESFTATAPFVQIGRFFLSSGLIDKVDNFKSLSLSKLEDPHVDIIRRGDFFYHSENPKYPEVGDLRVSFSYAGLSGDDPDLGPAHVVTVIARQRGDQLVPFSTKSGDTLLLLHHGDFSAEEVFHRELRSNSMKTWGLRAAGWMAMFMGLNLMTRILYTLVDWFPVFRDLVNIGLKAFAFCVATSLTLLTVAAGWLFYRPLWALLIAGLALVPIIVARTRVPAKKLE.

The residue at position 2 (Ala-2) is an N-acetylalanine. The Nuclear portion of the chain corresponds to 2–31 (AANYSSTSTRREHVKVKTGSQPGFLERLSE). A helical transmembrane segment spans residues 32–52 (TWGGMFVGLMAFLLSFYLIFT). The Perinuclear space segment spans residues 53-313 (NEGRALKTAT…NSMKTWGLRA (261 aa)). A helical membrane pass occupies residues 314-334 (AGWMAMFMGLNLMTRILYTLV). Topologically, residues 335-345 (DWFPVFRDLVN) are nuclear. A helical transmembrane segment spans residues 346–366 (IGLKAFAFCVATSLTLLTVAA). The Perinuclear space portion of the chain corresponds to 367 to 368 (GW). The chain crosses the membrane as a helical span at residues 369 to 389 (LFYRPLWALLIAGLALVPIIV). The Nuclear segment spans residues 390–400 (ARTRVPAKKLE).

The protein belongs to the TMEM43 family. Can form oligomers through the transmembrane domains. Interacts with EMD; the interaction retains EMD at the inner nuclear membrane. Interacts with LMNA and LMNB2. Interacts with SUN2. Interacts with RNF26; this interaction is important to modulate innate immune signaling through the cGAS-STING pathway. Interacts with CARD10. Interacts with gap junctions proteins GJB2/Cx26 and GJB4/Cx30.

The protein localises to the endoplasmic reticulum membrane. Its subcellular location is the nucleus inner membrane. The protein resides in the cell membrane. May have an important role in maintaining nuclear envelope structure by organizing protein complexes at the inner nuclear membrane. Required for retaining emerin at the inner nuclear membrane. Plays a role in the modulation of innate immune signaling through the cGAS-STING pathway by interacting with RNF26. In addition, functions as a critical signaling component in mediating NF-kappa-B activation by acting downstream of EGFR and upstream of CARD10. Contributes to passive conductance current in cochlear glia-like supporting cells, mediated by gap junctions and necessary for hearing. This Pongo abelii (Sumatran orangutan) protein is Transmembrane protein 43 (TMEM43).